We begin with the raw amino-acid sequence, 203 residues long: Snake venom metalloproteinase adamalysin-2 (203 aa).

Positions 7–203 (RYIELVVVAD…YKPQCILNKP (197 aa)) constitute a Peptidase M12B domain. Positions 10 and 94 each coordinate Ca(2+). Intrachain disulfides connect C118–C198 and C158–C165. H143 provides a ligand contact to Zn(2+). The active site involves E144. 2 residues coordinate Zn(2+): H147 and H153. The Ca(2+) site is built by C198 and N201.

This sequence belongs to the venom metalloproteinase (M12B) family. P-I subfamily. As to quaternary structure, monomer. Zn(2+) is required as a cofactor. In terms of tissue distribution, expressed by the venom gland.

The protein resides in the secreted. It carries out the reaction Cleavage of 1-Phe-|-Val-2, 5-His-|-Leu-6, 14-Ala-|-Leu-15, 15-Leu-|-Tyr-16, and 16-Tyr-|-Leu-17 of insulin B chain.. Has no significant hemorrhagic activity, but inactivates serpins by limited proteolysis of their reactive-site loops. The chain is Snake venom metalloproteinase adamalysin-2 from Crotalus adamanteus (Eastern diamondback rattlesnake).